Reading from the N-terminus, the 296-residue chain is Urease accessory protein UreD (296 aa).

This sequence belongs to the UreD family. In terms of assembly, ureD, UreF and UreG form a complex that acts as a GTP-hydrolysis-dependent molecular chaperone, activating the urease apoprotein by helping to assemble the nickel containing metallocenter of UreC. The UreE protein probably delivers the nickel.

It localises to the cytoplasm. Its function is as follows. Required for maturation of urease via the functional incorporation of the urease nickel metallocenter. The polypeptide is Urease accessory protein UreD (Synechococcus sp. (strain CC9311)).